We begin with the raw amino-acid sequence, 267 residues long: Chlorophyll a-b binding protein 3A, chloroplastic (267 aa).

The N-terminal 34 residues, 1 to 34 (MAASTMALSSSTFAGKTVKLAPSSSEITGNGRIT), are a transit peptide targeting the chloroplast. The chain crosses the membrane as a helical span at residues 153-173 (LVHAQSILAIWACQVVLMGAV). Chlorophyll b-binding residues include Val154, Ser158, Gln166, Glu174, Arg177, and Leu183. Chlorophyll a is bound by residues Lys214, Glu215, Asn218, Arg220, Gln232, His247, and Ala256. The helical transmembrane segment at 221–241 (LAMFSMFGFFVQAIVTGKGPL) threads the bilayer. Position 263 (Phe263) interacts with chlorophyll b.

It belongs to the light-harvesting chlorophyll a/b-binding (LHC) protein family. As to quaternary structure, the LHC complex consists of chlorophyll a-b binding proteins. The cofactor is Binds at least 14 chlorophylls (8 Chl-a and 6 Chl-b) and carotenoids such as lutein and neoxanthin.. Post-translationally, photoregulated by reversible phosphorylation of its threonine residues.

The protein localises to the plastid. It is found in the chloroplast thylakoid membrane. Its function is as follows. The light-harvesting complex (LHC) functions as a light receptor, it captures and delivers excitation energy to photosystems with which it is closely associated. The polypeptide is Chlorophyll a-b binding protein 3A, chloroplastic (CAB3A) (Solanum lycopersicum (Tomato)).